The sequence spans 325 residues: Exogastrula-inducing polypeptide (325 aa).

A signal peptide spans 1–19 (MKVSLVLLIAVFGLAMVAA). Positions 20–45 (EETLESKLQMALKSLLQENEELNLEG) are excised as a propeptide. EGF-like domains follow at residues 48–91 (TKGG…SSCY) and 107–154 (TVAR…GGCS). 6 cysteine pairs are disulfide-bonded: Cys52/Cys65, Cys59/Cys75, Cys77/Cys90, Cys111/Cys124, Cys118/Cys138, and Cys140/Cys153. Residues 160-177 (ELEYLSYVARDVEMEMLA) constitute a propeptide that is removed on maturation. The EGF-like 3 domain maps to 180-226 (SVYQCNRDTNSCDGFGKCEKSTFGRTTGQYICNCDDGYRNNAYGGCS). Disulfide bonds link Cys184–Cys197, Cys191–Cys211, and Cys213–Cys225. Residues 232–249 (EIEYLSMIARDQELEMQA) constitute a propeptide that is removed on maturation. Residues 252-298 (SLPQCNRDTNYCDGFGQCVKSTFGRTTGQYICSCNDGYENNLYGGCS) enclose the EGF-like 4 domain. Cystine bridges form between Cys256–Cys269, Cys263–Cys283, and Cys285–Cys297. A propeptide spanning residues 313-325 (MEILRSLANLLEE) is cleaved from the precursor.

It is found in the secreted. The protein resides in the extracellular space. The protein localises to the extracellular matrix. Its function is as follows. The EGIP peptides are factors effective to extrude the archenteron toward outside of embryos. May have a role in the induction of gastrulation. The polypeptide is Exogastrula-inducing polypeptide (Heliocidaris crassispina (Sea urchin)).